We begin with the raw amino-acid sequence, 103 residues long: Small ribosomal subunit protein bS6c (103 aa).

The protein belongs to the bacterial ribosomal protein bS6 family.

The protein localises to the plastid. It localises to the chloroplast. In terms of biological role, binds together with bS18 to 16S ribosomal RNA. The sequence is that of Small ribosomal subunit protein bS6c (rps6) from Cyanidium caldarium (Red alga).